Here is a 393-residue protein sequence, read N- to C-terminus: Dwarfin sma-3 (393 aa).

Positions 10 to 139 (PAVKKLLGWK…YQRLSRPQGL (130 aa)) constitute an MH1 domain. Zn(2+)-binding residues include C65, C110, C124, and H129. Residues 136–190 (PQGLNSSMPSPQPISSPNTIWQSSGSSTASCASSPSPSVFSEDGGEVQVHQRPPP) are disordered. Over residues 141–176 (SSMPSPQPISSPNTIWQSSGSSTASCASSPSPSVFS) the composition is skewed to low complexity. In terms of domain architecture, MH2 spans 197-393 (WAQITYFELN…TNLMEPNSMT (197 aa)).

This sequence belongs to the dwarfin/SMAD family.

The protein localises to the cytoplasm. Its subcellular location is the nucleus. In terms of biological role, involved in TGF-beta pathway. Plays a role in male tail tip morphogenesis. The polypeptide is Dwarfin sma-3 (Caenorhabditis elegans).